A 568-amino-acid chain; its full sequence is Phosphoprotein (568 aa).

Disordered stretches follow at residues 1 to 23 and 38 to 320; these read MDQDAFILKEDSEVEREAPGGRE and SEPT…GIGE. Over residues 7-20 the composition is skewed to basic and acidic residues; it reads ILKEDSEVEREAPG. The tract at residues 33 to 41 is N0 binding; that stretch reads DAVLSSEPT. Over residues 50-59 the composition is skewed to polar residues; that stretch reads LHNTINTPQG. Ser68 carries the phosphoserine; by host modification. Residues 83-101 are compositionally biased toward basic and acidic residues; sequence RSGEESRVSGRTSKPEAEA. The residue at position 125 (Ser125) is a Phosphoserine; by host. The segment covering 150-168 has biased composition (basic and acidic residues); the sequence is GIEDENREMAAHPDKRGED. Over residues 191–206 the composition is skewed to polar residues; that stretch reads ASNNGRSMEPGSSHSA. 4 positions are modified to phosphoserine; by host: Ser192, Ser249, Ser257, and Ser260. Multimerization regions lie at residues 344 to 411 and 362 to 432; these read FESS…KRFS and ANYA…HIIT. Residues 345-412 are bipartite nucleocapsid binding domain 1; sequence ESSRDASYVF…FRDIYKRFSE (68 aa). A coiled-coil region spans residues 364-429; it reads YAEMTFNVCG…LLMSNLSTLH (66 aa). 2 l protein binding regions span residues 412 to 445 and 413 to 445; these read EYQKEQNSLLMSNLSTLHIITDRGGKTDNTDSLT and YQKEQNSLLMSNLSTLHIITDRGGKTDNTDSLT. Phosphoserine; by host occurs at positions 447 and 449. Positions 479–568 are bipartite nucleocapsid binding domain 2; it reads DLIREDEFRD…VEEDIESLTN (90 aa). The interval 479–568 is interaction with the nucleocapsid (N-RNA); that stretch reads DLIREDEFRD…VEEDIESLTN (90 aa). The disordered stretch occupies residues 495-516; it reads YQERDTEPRASNASRLLPSKEK. The interval 547–566 is formation of N-RNA complex involved in transcription and replication; sequence KTDQEVKAVMELVEEDIESL.

The protein belongs to the respirovirus P protein family. As to quaternary structure, homotetramer. Interacts (via multimerization domain) with polymerase L; this interaction forms the polymerase complex. Interacts (via N-terminus) with N0; this interaction allows P to chaperon N0 before encapsidation and form the N-P complex. Interacts (via C-terminus) with N-RNA template; this interaction positions the polymerase on the template. In terms of processing, phosphorylated by PKC/PRKCZ, and other unknown kinases. Phosphorylation is necessary for viral transcription and replication. The N-terminus contains the majority of phosphorylated sites. Ser-249 is the major site of phosphorylation, but is not necessary for most functions.

It localises to the host cytoplasm. Functionally, essential cofactor of the RNA polymerase L that plays a central role in the transcription and replication by forming the polymerase complex with RNA polymerase L and recruiting L to the genomic N-RNA template for RNA synthesis. Also plays a central role in the encapsidation of nascent RNA chains by forming the encapsidation complex with the nucleocapsid protein N (N-P complex). Acts as a chaperone for newly synthesized free N protein, so-called N0, allowing encapsidation of nascent RNA chains during replication. The nucleoprotein protein N prevents excessive phosphorylation of P, which leads to down-regulation of viral transcription/ replication. Participates, together with N, in the formation of viral factories (viroplasms), which are large inclusions in the host cytoplasm where replication takes place. Recruits host PI4KB and remodel the host endoplasmic reticulum membrane to form viral replication factories. This chain is Phosphoprotein (P/V/C), found in Sendai virus (strain Fushimi) (SeV).